The primary structure comprises 203 residues: A-type ATP synthase subunit E (203 aa).

It belongs to the V-ATPase E subunit family. In terms of assembly, might form a homodimer. Interacts with subunit H via residues 41-60. The A-type ATPase is composed of subunits A(3), B(3), C, D, E(1 or 2), F, H(2), I and K(x).

The protein resides in the cell membrane. Component of the A-type ATP synthase that produces ATP from ADP in the presence of a proton gradient across the membrane. This chain is A-type ATP synthase subunit E, found in Methanocaldococcus jannaschii (strain ATCC 43067 / DSM 2661 / JAL-1 / JCM 10045 / NBRC 100440) (Methanococcus jannaschii).